The following is a 229-amino-acid chain: MAKKSKQLRAALEKIDSTKAYSVEEAVALAKETNFAKFDATVEVAYNLNIDVKKADQQIRGAMVLPNGTGKTSRVLVFARGAKAEEAKAAGADFVGEDDLVAKINDGWLDFDVVIATPDMMALVGRLGRVLGPRNLMPNPKTGTVTMDVAKAVEESKGGKITYRADRAGNVQAIIGKVSFEAEKLVENFKAFNETIQKAKPATAKGTYVTNLTITTTQGVGIKVDVNSL.

Belongs to the universal ribosomal protein uL1 family. In terms of assembly, part of the 50S ribosomal subunit.

Its function is as follows. Binds directly to 23S rRNA. The L1 stalk is quite mobile in the ribosome, and is involved in E site tRNA release. In terms of biological role, protein L1 is also a translational repressor protein, it controls the translation of the L11 operon by binding to its mRNA. The polypeptide is Large ribosomal subunit protein uL1 (Streptococcus pneumoniae serotype 2 (strain D39 / NCTC 7466)).